The chain runs to 319 residues: 4-diphosphocytidyl-2-C-methyl-D-erythritol kinase (319 aa).

Lys18 is an active-site residue. 103–113 serves as a coordination point for ATP; the sequence is PIGAGLAGGST. Residue Asp145 is part of the active site.

Belongs to the GHMP kinase family. IspE subfamily.

It catalyses the reaction 4-CDP-2-C-methyl-D-erythritol + ATP = 4-CDP-2-C-methyl-D-erythritol 2-phosphate + ADP + H(+). Its pathway is isoprenoid biosynthesis; isopentenyl diphosphate biosynthesis via DXP pathway; isopentenyl diphosphate from 1-deoxy-D-xylulose 5-phosphate: step 3/6. In terms of biological role, catalyzes the phosphorylation of the position 2 hydroxy group of 4-diphosphocytidyl-2C-methyl-D-erythritol. The chain is 4-diphosphocytidyl-2-C-methyl-D-erythritol kinase from Prochlorococcus marinus (strain NATL1A).